The chain runs to 401 residues: G2/mitotic-specific cyclin-B1 (401 aa).

2 disordered regions span residues 1–30 (MALR…PTLK) and 84–103 (KVQV…ETSG). The segment covering 9–26 (RLASTRAEQGGKTCSVSG) has biased composition (polar residues).

The protein belongs to the cyclin family. Cyclin AB subfamily. In terms of assembly, interacts with the CDK1 protein kinase to form a serine/threonine kinase holoenzyme complex also known as maturation promoting factor (MPF). The cyclin subunit imparts substrate specificity to the complex.

Essential for the control of the cell cycle at the G2/M (mitosis) transition. The polypeptide is G2/mitotic-specific cyclin-B1 (ccnb1) (Oryzias javanicus (Javanese ricefish)).